The sequence spans 478 residues: Cytochrome c-552 (478 aa).

A signal peptide spans 1–26 (MTRIKINARRIFSLLIPFFFFTSVHA). Histidine 94 serves as a coordination point for heme c. Heme contacts are provided by cysteine 122, cysteine 125, and lysine 126. Heme c is bound by residues cysteine 160, cysteine 163, histidine 164, cysteine 209, cysteine 212, and histidine 213. Residues glutamate 215, tyrosine 216, lysine 261, and glutamine 263 each coordinate Ca(2+). Tyrosine 216 provides a ligand contact to substrate. Histidine 264 contributes to the substrate binding site. Residues histidine 275, cysteine 282, cysteine 285, histidine 286, histidine 301, cysteine 314, cysteine 317, histidine 318, and histidine 393 each contribute to the heme c site.

The protein belongs to the cytochrome c-552 family. The cofactor is Ca(2+). It depends on heme c as a cofactor.

Its subcellular location is the periplasm. The catalysed reaction is 6 Fe(III)-[cytochrome c] + NH4(+) + 2 H2O = 6 Fe(II)-[cytochrome c] + nitrite + 8 H(+). It functions in the pathway nitrogen metabolism; nitrate reduction (assimilation). Its function is as follows. Catalyzes the reduction of nitrite to ammonia, consuming six electrons in the process. The chain is Cytochrome c-552 from Escherichia coli O6:H1 (strain CFT073 / ATCC 700928 / UPEC).